The primary structure comprises 253 residues: MNDPRKTESTTHFGYQSVPESQKARKVAEVFHSVAAKYDLMNDVLSGGLHRLWKRFTIELSGVRRGNRVLDIAGGTGDLTLQFSRLVGESGEVLLADINDSMLKVGRDRLLDRGVAGNVRFVQADAEKLPFPDNHFDVITIAFGLRNVTRKEDALRSMLRVLKPGGRLLVLEFSKPSNALLGKVYDAYSFAFMPLAGKLITNDADSYRYLAESIRMHPDQETLKSMMAGAGFERVTYHNMTGGIVALHRGLKP.

Residues Thr-76, Asp-97, and 125–126 (DA) each bind S-adenosyl-L-methionine.

It belongs to the class I-like SAM-binding methyltransferase superfamily. MenG/UbiE family.

It carries out the reaction a 2-demethylmenaquinol + S-adenosyl-L-methionine = a menaquinol + S-adenosyl-L-homocysteine + H(+). The enzyme catalyses a 2-methoxy-6-(all-trans-polyprenyl)benzene-1,4-diol + S-adenosyl-L-methionine = a 5-methoxy-2-methyl-3-(all-trans-polyprenyl)benzene-1,4-diol + S-adenosyl-L-homocysteine + H(+). It participates in quinol/quinone metabolism; menaquinone biosynthesis; menaquinol from 1,4-dihydroxy-2-naphthoate: step 2/2. Its pathway is cofactor biosynthesis; ubiquinone biosynthesis. In terms of biological role, methyltransferase required for the conversion of demethylmenaquinol (DMKH2) to menaquinol (MKH2) and the conversion of 2-polyprenyl-6-methoxy-1,4-benzoquinol (DDMQH2) to 2-polyprenyl-3-methyl-6-methoxy-1,4-benzoquinol (DMQH2). The polypeptide is Ubiquinone/menaquinone biosynthesis C-methyltransferase UbiE (Azotobacter vinelandii (strain DJ / ATCC BAA-1303)).